Consider the following 130-residue polypeptide: uncharacterized protein (130 aa).

It belongs to the thioester dehydratase family. FabZ subfamily.

This is an uncharacterized protein from Bacillus subtilis (strain 168).